Consider the following 300-residue polypeptide: Cation-efflux pump FieF (300 aa).

4 helical membrane passes run 12–32 (AALS…FAWW), 40–60 (LAAL…LFVV), 82–102 (AALA…LTGF), and 114–134 (PSIG…LVTF). 2 residues coordinate Zn(2+): Asp-45 and Asp-49. His-153 and Asp-157 together coordinate Zn(2+). 2 helical membrane-spanning segments follow: residues 155–175 (QSDV…WYGF) and 178–198 (ADAL…LRMG).

Belongs to the cation diffusion facilitator (CDF) transporter (TC 2.A.4) family. FieF subfamily. Homodimer.

It is found in the cell inner membrane. It catalyses the reaction Zn(2+)(in) + H(+)(out) = Zn(2+)(out) + H(+)(in). It carries out the reaction Cd(2+)(in) + H(+)(out) = Cd(2+)(out) + H(+)(in). The catalysed reaction is Fe(2+)(in) + H(+)(out) = Fe(2+)(out) + H(+)(in). Functionally, divalent metal cation transporter which exports Zn(2+), Cd(2+) and possibly Fe(2+). May be involved in zinc and iron detoxification by efflux. In Yersinia pestis bv. Antiqua (strain Antiqua), this protein is Cation-efflux pump FieF.